Here is a 516-residue protein sequence, read N- to C-terminus: Putative glucosylceramidase 2 (516 aa).

A signal peptide spans 1-23 (MSIAWSCFVLGLFALASLQVALA). Glutamate 254 acts as the Proton donor in catalysis. Glutamate 358 (nucleophile) is an active-site residue.

This sequence belongs to the glycosyl hydrolase 30 family.

It catalyses the reaction a beta-D-glucosylceramide + H2O = an N-acyl-sphingoid base + D-glucose. The catalysed reaction is a beta-D-glucosyl-(1&lt;-&gt;1')-N-acylsphing-4-enine + H2O = an N-acylsphing-4-enine + D-glucose. It carries out the reaction an N-acyl-1-beta-D-glucosyl-15-methylhexadecasphing-4-enine + H2O = an N-acyl-15-methylhexadecasphing-4-enine + D-glucose. It participates in lipid metabolism; sphingolipid metabolism. Functionally, glucosylceramidase that catalyzes the hydrolysis of glucosylceramides into free ceramides and glucose. C.elegans contain specific sphingoid bases, which are unique or different in structure compared to the sphingoid bases found in other animals. Two examples of these distinctive compounds are: 15-methylhexadecasphinganine and 15-methylhexadecasphing-4-enine. The protein is Putative glucosylceramidase 2 (gba-2) of Caenorhabditis elegans.